Consider the following 504-residue polypeptide: Multicopper oxidase MmcO (504 aa).

The tat-type signal signal peptide spans 1-44; sequence MPELATSGNAFDKRRFSRRGFLGAGIASGFALAACASKPTASGA. Cu cation is bound by residues His120, His122, His161, and His163. The region spanning 190–349 is the Plastocyanin-like domain; sequence EWIIILDDWT…NALARALLST (160 aa). His437, His440, His442, His485, Cys486, His487, and His491 together coordinate Cu cation.

Belongs to the multicopper oxidase family. It depends on Cu cation as a cofactor. Predicted to be exported by the Tat system. The position of the signal peptide cleavage has not been experimentally proven.

The protein resides in the cell inner membrane. It localises to the periplasm. It catalyses the reaction 4 Fe(2+) + O2 + 4 H(+) = 4 Fe(3+) + 2 H2O. Required for copper resistance. In vitro, oxidizes organic substrates and Fe(2+). May act in vivo by oxidation of toxic periplasmic Cu(+). The sequence is that of Multicopper oxidase MmcO from Mycobacterium tuberculosis (strain ATCC 25618 / H37Rv).